The primary structure comprises 226 residues: Ribonuclease 3 (226 aa).

Residues 6–128 (INKLQRKLGY…LIGGVFLDSD (123 aa)) enclose the RNase III domain. Glu-41 serves as a coordination point for Mg(2+). Asp-45 is an active-site residue. Residues Asp-114 and Glu-117 each contribute to the Mg(2+) site. Glu-117 is an active-site residue. The 71-residue stretch at 155–225 (DPKTRLQEFL…AEQALIKLGI (71 aa)) folds into the DRBM domain.

Belongs to the ribonuclease III family. Homodimer. It depends on Mg(2+) as a cofactor.

It localises to the cytoplasm. It catalyses the reaction Endonucleolytic cleavage to 5'-phosphomonoester.. Digests double-stranded RNA. Involved in the processing of primary rRNA transcript to yield the immediate precursors to the large and small rRNAs (23S and 16S). Processes some mRNAs, and tRNAs when they are encoded in the rRNA operon. Processes pre-crRNA and tracrRNA of type II CRISPR loci if present in the organism. In Erwinia tasmaniensis (strain DSM 17950 / CFBP 7177 / CIP 109463 / NCPPB 4357 / Et1/99), this protein is Ribonuclease 3.